The following is a 137-amino-acid chain: Transcription antitermination protein NusB (137 aa).

This sequence belongs to the NusB family.

Its function is as follows. Involved in transcription antitermination. Required for transcription of ribosomal RNA (rRNA) genes. Binds specifically to the boxA antiterminator sequence of the ribosomal RNA (rrn) operons. The chain is Transcription antitermination protein NusB from Actinobacillus pleuropneumoniae serotype 5b (strain L20).